Reading from the N-terminus, the 120-residue chain is NAD(P)H-quinone oxidoreductase subunit 3, chloroplastic (120 aa).

3 helical membrane passes run 9 to 29 (IFWTFLIISSVIPILAFLISG), 64 to 84 (MFALVFVVFDVETVFLYPWAM), and 88 to 108 (VLGVSVFIEAFIFVLIPIVGS).

Belongs to the complex I subunit 3 family. As to quaternary structure, NDH is composed of at least 16 different subunits, 5 of which are encoded in the nucleus.

It is found in the plastid. The protein localises to the chloroplast thylakoid membrane. The catalysed reaction is a plastoquinone + NADH + (n+1) H(+)(in) = a plastoquinol + NAD(+) + n H(+)(out). The enzyme catalyses a plastoquinone + NADPH + (n+1) H(+)(in) = a plastoquinol + NADP(+) + n H(+)(out). Functionally, NDH shuttles electrons from NAD(P)H:plastoquinone, via FMN and iron-sulfur (Fe-S) centers, to quinones in the photosynthetic chain and possibly in a chloroplast respiratory chain. The immediate electron acceptor for the enzyme in this species is believed to be plastoquinone. Couples the redox reaction to proton translocation, and thus conserves the redox energy in a proton gradient. In Piper cenocladum (Ant piper), this protein is NAD(P)H-quinone oxidoreductase subunit 3, chloroplastic.